The chain runs to 235 residues: NifU-like protein 2, chloroplastic (235 aa).

The N-terminal 16 residues, 1 to 16 (MQLLTLNPAAISRTPP), are a transit peptide targeting the chloroplast.

It belongs to the NifU family. As to quaternary structure, homodimer; disulfide-linked. Requires [2Fe-2S] cluster as cofactor. In terms of tissue distribution, predominantly expressed in leaves and floral stalks. Ubiquitous (at protein level).

The protein localises to the plastid. The protein resides in the chloroplast stroma. Its function is as follows. Molecular scaffold for [Fe-S] cluster assembly of chloroplastic iron-sulfur proteins. Required for biogenesis of ferredoxin, a major photosynthetic electron carrier containing [2Fe-2S] cluster. Required for the assembly of photosystem I complex. In Arabidopsis thaliana (Mouse-ear cress), this protein is NifU-like protein 2, chloroplastic (NIFU2).